Here is a 167-residue protein sequence, read N- to C-terminus: Endoribonuclease YbeY (167 aa).

Zn(2+) is bound by residues histidine 131, histidine 135, and histidine 141.

This sequence belongs to the endoribonuclease YbeY family. Requires Zn(2+) as cofactor.

It localises to the cytoplasm. Functionally, single strand-specific metallo-endoribonuclease involved in late-stage 70S ribosome quality control and in maturation of the 3' terminus of the 16S rRNA. This chain is Endoribonuclease YbeY, found in Rickettsia prowazekii (strain Madrid E).